We begin with the raw amino-acid sequence, 284 residues long: Acetyl-coenzyme A carboxylase carboxyl transferase subunit beta (284 aa).

A CoA carboxyltransferase N-terminal domain is found at Phe-31–Lys-284. 4 residues coordinate Zn(2+): Cys-35, Cys-38, Cys-54, and Cys-57. The C4-type zinc-finger motif lies at Cys-35–Cys-57.

This sequence belongs to the AccD/PCCB family. As to quaternary structure, acetyl-CoA carboxylase is a heterohexamer composed of biotin carboxyl carrier protein (AccB), biotin carboxylase (AccC) and two subunits each of ACCase subunit alpha (AccA) and ACCase subunit beta (AccD). It depends on Zn(2+) as a cofactor.

The protein localises to the cytoplasm. The catalysed reaction is N(6)-carboxybiotinyl-L-lysyl-[protein] + acetyl-CoA = N(6)-biotinyl-L-lysyl-[protein] + malonyl-CoA. It functions in the pathway lipid metabolism; malonyl-CoA biosynthesis; malonyl-CoA from acetyl-CoA: step 1/1. In terms of biological role, component of the acetyl coenzyme A carboxylase (ACC) complex. Biotin carboxylase (BC) catalyzes the carboxylation of biotin on its carrier protein (BCCP) and then the CO(2) group is transferred by the transcarboxylase to acetyl-CoA to form malonyl-CoA. This is Acetyl-coenzyme A carboxylase carboxyl transferase subunit beta from Clostridioides difficile (strain 630) (Peptoclostridium difficile).